We begin with the raw amino-acid sequence, 175 residues long: Ribosome maturation factor RimM (175 aa).

Residues 96-175 (EGDYYWHDLI…TIEVDWDAGF (80 aa)) enclose the PRC barrel domain.

Belongs to the RimM family. In terms of assembly, binds ribosomal protein uS19.

Its subcellular location is the cytoplasm. Functionally, an accessory protein needed during the final step in the assembly of 30S ribosomal subunit, possibly for assembly of the head region. Essential for efficient processing of 16S rRNA. May be needed both before and after RbfA during the maturation of 16S rRNA. It has affinity for free ribosomal 30S subunits but not for 70S ribosomes. The chain is Ribosome maturation factor RimM from Actinobacillus succinogenes (strain ATCC 55618 / DSM 22257 / CCUG 43843 / 130Z).